The primary structure comprises 278 residues: Elongation factor Ts (278 aa).

The tract at residues 81 to 84 is involved in Mg(2+) ion dislocation from EF-Tu; that stretch reads TDFV.

Belongs to the EF-Ts family.

The protein resides in the cytoplasm. Associates with the EF-Tu.GDP complex and induces the exchange of GDP to GTP. It remains bound to the aminoacyl-tRNA.EF-Tu.GTP complex up to the GTP hydrolysis stage on the ribosome. This Thermobifida fusca (strain YX) protein is Elongation factor Ts.